A 122-amino-acid polypeptide reads, in one-letter code: Large ribosomal subunit protein uL18 (122 aa).

A disordered region spans residues 1–24 (MLKKADKNANRLQRHKRVRRKISG). Positions 12 to 22 (LQRHKRVRRKI) are enriched in basic residues.

It belongs to the universal ribosomal protein uL18 family. In terms of assembly, part of the 50S ribosomal subunit; part of the 5S rRNA/L5/L18/L25 subcomplex. Contacts the 5S and 23S rRNAs.

In terms of biological role, this is one of the proteins that bind and probably mediate the attachment of the 5S RNA into the large ribosomal subunit, where it forms part of the central protuberance. This chain is Large ribosomal subunit protein uL18, found in Clostridioides difficile (strain 630) (Peptoclostridium difficile).